The following is a 144-amino-acid chain: uncharacterized protein (144 aa).

Residues 98–127 are disordered; it reads PLADGATVDSQASENGEKEAQPTPPKEGLL.

This is an uncharacterized protein from Aedes vexans (Inland floodwater mosquito).